The chain runs to 409 residues: Isocitrate dehydrogenase [NADP] 1 (409 aa).

The NADP(+) site is built by lysine 75, threonine 78, threonine 80, and arginine 85. Aspartate 255, aspartate 278, and aspartate 282 together coordinate Mn(2+). 5 residues coordinate NADP(+): glycine 313, threonine 314, valine 315, histidine 318, and asparagine 331.

This sequence belongs to the isocitrate and isopropylmalate dehydrogenases family. As to quaternary structure, homodimer. Mg(2+) serves as cofactor. Requires Mn(2+) as cofactor.

It catalyses the reaction D-threo-isocitrate + NADP(+) = 2-oxoglutarate + CO2 + NADPH. Catalyzes the oxidative decarboxylation of isocitrate to 2-oxoglutarate and carbon dioxide with the concomitant reduction of NADP(+). This chain is Isocitrate dehydrogenase [NADP] 1 (icd), found in Mycobacterium bovis (strain ATCC BAA-935 / AF2122/97).